Reading from the N-terminus, the 143-residue chain is Large ribosomal subunit protein uL16c (143 aa).

The protein belongs to the universal ribosomal protein uL16 family. In terms of assembly, part of the 50S ribosomal subunit.

It localises to the plastid. The protein localises to the chloroplast. The chain is Large ribosomal subunit protein uL16c from Cyanidioschyzon merolae (strain NIES-3377 / 10D) (Unicellular red alga).